We begin with the raw amino-acid sequence, 400 residues long: MQELGITGQGSVRVTRKEGNVVVLEKDLATEQMVLAMGPQHPSTHGVLKLECFTDGEVVTHAEPYLGYLHRCFEKHCEVVDYPGIVPYTDRMDYLAGMNSEWAYCLAVEKLLDLELPRRVEFIRVIVSELNRIASHLVAIGTYAIDLGAFTPFLFCFRDREHILSLLEWASGARMLYNYIWIGGLAYDVPADFNKRVKEFVDYFRPKAVELYQLLTENEIFVKRTKGIGIMPADVAINYGWSGPMLRGSGVQWDLRRNDPYSVYPELDFKVPIPDGKFSDVGDCLSRHLVRALEMDESLSIIEQCIDKMPGSEGFNPRAAVPKRVRAKAGEVYCRAENPRGELGFYIQSDGKSTKPLRCKARSSCFVNLSAMKDLSKGQLIPDLVAIIGSIDIVLGEVDR.

The protein belongs to the complex I 49 kDa subunit family. In terms of assembly, NDH-1 is composed of 14 different subunits. Subunits NuoB, C, D, E, F, and G constitute the peripheral sector of the complex.

It localises to the cell inner membrane. It catalyses the reaction a quinone + NADH + 5 H(+)(in) = a quinol + NAD(+) + 4 H(+)(out). Its function is as follows. NDH-1 shuttles electrons from NADH, via FMN and iron-sulfur (Fe-S) centers, to quinones in the respiratory chain. The immediate electron acceptor for the enzyme in this species is believed to be a menaquinone. Couples the redox reaction to proton translocation (for every two electrons transferred, four hydrogen ions are translocated across the cytoplasmic membrane), and thus conserves the redox energy in a proton gradient. The sequence is that of NADH-quinone oxidoreductase subunit D from Chlorobium phaeobacteroides (strain DSM 266 / SMG 266 / 2430).